We begin with the raw amino-acid sequence, 211 residues long: Ceramide-1-phosphate transfer protein (211 aa).

An N-acylsphingoid base 1-phosphate contacts are provided by Asp53, Lys57, Arg103, Arg107, and His147.

The protein belongs to the GLTP family.

The protein localises to the cytoplasm. It localises to the cytosol. The protein resides in the golgi apparatus. It is found in the trans-Golgi network membrane. Its subcellular location is the cell membrane. The protein localises to the endosome membrane. It localises to the nucleus outer membrane. It carries out the reaction N-(hexadecanoyl)-sphing-4-enine-1-phosphate(in) = N-(hexadecanoyl)-sphing-4-enine-1-phosphate(out). The catalysed reaction is N-(9Z-octadecenoyl)-sphing-4-enine-1-phosphate(in) = N-(9Z-octadecenoyl)-sphing-4-enine-1-phosphate(out). Mediates the intracellular transfer of ceramide-1-phosphate (C1P) between organelle membranes and the cell membrane. Required for normal structure of the Golgi stacks. Can bind phosphoceramides with a variety of aliphatic chains, but has a preference for lipids with saturated C16:0 or monounsaturated C18:1 aliphatic chains, and is inefficient with phosphoceramides containing lignoceryl (C24:0). Plays a role in the regulation of the cellular levels of ceramide-1-phosphate, and thereby contributes to the regulation of phospholipase PLA2G4A activity and the release of arachidonic acid. Has no activity with galactosylceramide, lactosylceramide, sphingomyelin, phosphatidylcholine, phosphatidic acid and ceramide. C1P transfer is stimulated by phosphatidylserine in C1P source vesicles. Regulates autophagy and pyroptosis, but not apoptosis. This is Ceramide-1-phosphate transfer protein (cptp) from Danio rerio (Zebrafish).